We begin with the raw amino-acid sequence, 601 residues long: DNA topoisomerase I, mitochondrial (601 aa).

The transit peptide at 1–50 (MRVVRLLRLRAALTLLGEVPRRPASRGVPGSRRTQKGSGARWEKEKHEDG) directs the protein to the mitochondrion. The segment at 22–48 (RPASRGVPGSRRTQKGSGARWEKEKHE) is disordered. Interaction with DNA stretches follow at residues 261–262 (KY), 324–329 (RAGNEK), and 421–423 (TAK). The region spanning 268-601 (CSKLKGETAW…LAMAGEDFEF (334 aa)) is the Topo IB-type catalytic domain. Y559 acts as the O-(3'-phospho-DNA)-tyrosine intermediate in catalysis.

It belongs to the type IB topoisomerase family. It depends on Ca(2+) as a cofactor. The cofactor is Mg(2+).

Its subcellular location is the mitochondrion. It carries out the reaction ATP-independent breakage of single-stranded DNA, followed by passage and rejoining.. Functionally, releases the supercoiling and torsional tension of DNA introduced during duplication of mitochondrial DNA by transiently cleaving and rejoining one strand of the DNA duplex. Introduces a single-strand break via transesterification at a target site in duplex DNA. The scissile phosphodiester is attacked by the catalytic tyrosine of the enzyme, resulting in the formation of a DNA-(3'-phosphotyrosyl)-enzyme intermediate and the expulsion of a 5'-OH DNA strand. The free DNA strand then rotates around the intact phosphodiester bond on the opposing strand, thus removing DNA supercoils. Finally, in the religation step, the DNA 5'-OH attacks the covalent intermediate to expel the active-site tyrosine and restore the DNA phosphodiester backbone. The sequence is that of DNA topoisomerase I, mitochondrial (TOP1MT) from Pan troglodytes (Chimpanzee).